A 248-amino-acid polypeptide reads, in one-letter code: Ureidoacrylate amidohydrolase RutB (248 aa).

Residue Asp41 is the Proton acceptor of the active site. Lys150 is an active-site residue. Cys183 (nucleophile) is an active-site residue.

This sequence belongs to the isochorismatase family. RutB subfamily.

It catalyses the reaction (Z)-3-ureidoacrylate + H2O + H(+) = (Z)-3-aminoacrylate + NH4(+) + CO2. It carries out the reaction (Z)-3-ureidoacrylate + H2O = (Z)-3-aminoacrylate + carbamate + H(+). The enzyme catalyses (Z)-2-methylureidoacrylate + H2O + H(+) = (Z)-2-methylaminoacrylate + NH4(+) + CO2. In terms of biological role, hydrolyzes ureidoacrylate to form aminoacrylate and carbamate. The carbamate hydrolyzes spontaneously, thereby releasing one of the nitrogen atoms of the pyrimidine ring as ammonia and one of its carbon atoms as CO2. This is Ureidoacrylate amidohydrolase RutB from Methylorubrum extorquens (strain CM4 / NCIMB 13688) (Methylobacterium extorquens).